The sequence spans 156 residues: Small ribosomal subunit protein uS7 (156 aa).

Belongs to the universal ribosomal protein uS7 family. As to quaternary structure, part of the 30S ribosomal subunit. Contacts proteins S9 and S11.

Its function is as follows. One of the primary rRNA binding proteins, it binds directly to 16S rRNA where it nucleates assembly of the head domain of the 30S subunit. Is located at the subunit interface close to the decoding center, probably blocks exit of the E-site tRNA. This Staphylococcus aureus (strain bovine RF122 / ET3-1) protein is Small ribosomal subunit protein uS7.